We begin with the raw amino-acid sequence, 442 residues long: Amino-acid acetyltransferase (442 aa).

Residues 295 to 442 (EQARAATIED…RSKVLSKTIS (148 aa)) enclose the N-acetyltransferase domain.

It belongs to the acetyltransferase family. ArgA subfamily.

Its subcellular location is the cytoplasm. The enzyme catalyses L-glutamate + acetyl-CoA = N-acetyl-L-glutamate + CoA + H(+). Its pathway is amino-acid biosynthesis; L-arginine biosynthesis; N(2)-acetyl-L-ornithine from L-glutamate: step 1/4. The sequence is that of Amino-acid acetyltransferase from Aeromonas salmonicida (strain A449).